Reading from the N-terminus, the 379-residue chain is DnaJ homolog subfamily B member 14 (379 aa).

At 1 to 244 (MEGNRDEAEK…GHEREEERGD (244 aa)) the chain is on the cytoplasmic side. The tract at residues 55–94 (STAGNSPHCRKPSGSGDQSKPNCTKDSTSGSGEGGKGYTK) is disordered. Over residues 69–84 (SGDQSKPNCTKDSTSG) the composition is skewed to polar residues. The J domain occupies 108 to 172 (NYYEVLGVTK…EKRKQYDLTG (65 aa)). The disordered stretch occupies residues 219 to 241 (SNGRAGYSQQHQHRHSGHEREEE). A helical membrane pass occupies residues 245–265 (GGFSVFIQLMPIIVLILVSLL). Residues 266–379 (SQLMVSNPPY…ERLTSLYKGG (114 aa)) lie on the Lumenal side of the membrane.

Belongs to the DnaJ family. DNAJB12/DNAJB14 subfamily. Interacts (via J domain) with HSPA8/Hsc70. Forms a multiprotein complex, at least composed of DNAJB12, DNAJB14, HSPA8/Hsc70 and SGTA; interaction with DNAJB14 and HSPA8/Hsc70 is direct.

The protein resides in the endoplasmic reticulum membrane. It is found in the nucleus membrane. Functionally, acts as a co-chaperone with HSPA8/Hsc70; required to promote protein folding and trafficking, prevent aggregation of client proteins, and promote unfolded proteins to endoplasmic reticulum-associated degradation (ERAD) pathway. Acts by determining HSPA8/Hsc70's ATPase and polypeptide-binding activities. Can also act independently of HSPA8/Hsc70: together with DNAJB12, acts as a chaperone that promotes maturation of potassium channels KCND2 and KCNH2 by stabilizing nascent channel subunits and assembling them into tetramers. While stabilization of nascent channel proteins is dependent on HSPA8/Hsc70, the process of oligomerization of channel subunits is independent of HSPA8/Hsc70. When overexpressed, forms membranous structures together with DNAJB12 and HSPA8/Hsc70 within the nucleus; the role of these structures, named DJANGOs, is still unclear. Its function is as follows. (Microbial infection) In case of infection by polyomavirus, involved in the virus endoplasmic reticulum membrane penetration and infection. In Homo sapiens (Human), this protein is DnaJ homolog subfamily B member 14.